Reading from the N-terminus, the 488-residue chain is Facilitated trehalose transporter Tret1-2 homolog (488 aa).

Topologically, residues 1-28 are cytoplasmic; sequence MKILMRADTHVSYSVPAEGPKANFTFSQ. A helical membrane pass occupies residues 29–49; that stretch reads VLAALSVSLCSLVVGFVSAYT. Residues 50–72 are Extracellular-facing; sequence SPALVSMTDRTITSFEVTKDAGS. The helical transmembrane segment at 73-93 threads the bilayer; sequence WVGGIMPLAALAGGITGGPLI. At 94–105 the chain is on the cytoplasmic side; sequence EYLGRRTTILAT. Residues 106-126 form a helical membrane-spanning segment; it reads AVPFIVSSLLIACAVNVIMIL. Residues 127–129 are Extracellular-facing; the sequence is CGR. A helical membrane pass occupies residues 130 to 150; it reads FLTGFCVGIASLSLPVYLGET. Residues 151-160 lie on the Cytoplasmic side of the membrane; sequence LQPEVRGTLG. Residues 161–181 traverse the membrane as a helical segment; it reads LLPTALGNIGILVCYVAGSFM. N-linked (GlcNAc...) asparagine glycosylation is present at asparagine 182. The Extracellular segment spans residues 182 to 184; the sequence is NWS. A helical transmembrane segment spans residues 185 to 205; sequence MLAFLGAALPVPFLILMIIIP. At 206-268 the chain is on the cytoplasmic side; sequence ETPRWFVNRG…ELFKRINLKP (63 aa). Residues 269 to 289 traverse the membrane as a helical segment; that stretch reads LSISLGLMFFQQFSGINAVIF. At 290-305 the chain is on the extracellular side; the sequence is YTVQIFKDAGSTIDSN. Residues 306–326 traverse the membrane as a helical segment; that stretch reads LCTIIVGIVNFFATFMGILLI. Residues 327–332 lie on the Cytoplasmic side of the membrane; the sequence is DRLGRK. Residues 333–353 traverse the membrane as a helical segment; the sequence is ILLYISDIAMILTLSILGGFF. The Extracellular portion of the chain corresponds to 354–372; the sequence is YCKAHGPDVSHLGWLPLTC. A helical transmembrane segment spans residues 373–393; sequence FVIYILGFSLGFGPIPWLMMG. The Cytoplasmic segment spans residues 394–402; it reads EILPAKIRG. A helical transmembrane segment spans residues 403–423; sequence PAASVVTAFNWFCTFVVTKTF. Residues 424–433 lie on the Extracellular side of the membrane; sequence QDLTVAMGAH. The helical transmembrane segment at 434 to 454 threads the bilayer; the sequence is GAFWLFGVVCIVGLFFVIICV. Topologically, residues 455 to 488 are cytoplasmic; it reads PETRGKSLEEIERKMMGRVPISAVVNIKPFSFNM.

It belongs to the major facilitator superfamily. Sugar transporter (TC 2.A.1.1) family. Trehalose transporter subfamily.

It is found in the cell membrane. Functionally, fails to transport trehalose. The protein is Facilitated trehalose transporter Tret1-2 homolog of Drosophila simulans (Fruit fly).